The sequence spans 458 residues: Argininosuccinate lyase (458 aa).

It belongs to the lyase 1 family. Argininosuccinate lyase subfamily.

The protein resides in the cytoplasm. The enzyme catalyses 2-(N(omega)-L-arginino)succinate = fumarate + L-arginine. Its pathway is amino-acid biosynthesis; L-arginine biosynthesis; L-arginine from L-ornithine and carbamoyl phosphate: step 3/3. In Salmonella schwarzengrund (strain CVM19633), this protein is Argininosuccinate lyase.